Here is a 511-residue protein sequence, read N- to C-terminus: Bifunctional purine biosynthesis protein PurH (511 aa).

The region spanning 1–145 is the MGS-like domain; that stretch reads MKKRALVSVS…KNHKFVSVIV (145 aa).

The protein belongs to the PurH family.

The catalysed reaction is (6R)-10-formyltetrahydrofolate + 5-amino-1-(5-phospho-beta-D-ribosyl)imidazole-4-carboxamide = 5-formamido-1-(5-phospho-D-ribosyl)imidazole-4-carboxamide + (6S)-5,6,7,8-tetrahydrofolate. It catalyses the reaction IMP + H2O = 5-formamido-1-(5-phospho-D-ribosyl)imidazole-4-carboxamide. The protein operates within purine metabolism; IMP biosynthesis via de novo pathway; 5-formamido-1-(5-phospho-D-ribosyl)imidazole-4-carboxamide from 5-amino-1-(5-phospho-D-ribosyl)imidazole-4-carboxamide (10-formyl THF route): step 1/1. It functions in the pathway purine metabolism; IMP biosynthesis via de novo pathway; IMP from 5-formamido-1-(5-phospho-D-ribosyl)imidazole-4-carboxamide: step 1/1. This chain is Bifunctional purine biosynthesis protein PurH, found in Bacillus cereus (strain ZK / E33L).